The sequence spans 245 residues: Polyhedrin (245 aa).

Belongs to the polyhedrin family.

Its function is as follows. Major component of the virus occlusion bodies, which are large proteinaceous structures (polyhedra), that protect the virus from the outside environment for extended periods until they are ingested by insect larvae. This Lepidoptera (butterflies and moths) protein is Polyhedrin.